Here is a 338-residue protein sequence, read N- to C-terminus: Glycerol-3-phosphate dehydrogenase [NAD(P)+] (338 aa).

NADPH-binding residues include serine 13, tryptophan 14, and lysine 108. Sn-glycerol 3-phosphate-binding residues include lysine 108, glycine 139, and serine 141. Alanine 143 serves as a coordination point for NADPH. Residues lysine 194, aspartate 247, serine 257, arginine 258, and asparagine 259 each coordinate sn-glycerol 3-phosphate. The active-site Proton acceptor is the lysine 194. NADPH is bound at residue arginine 258. Residues valine 282 and glutamate 284 each coordinate NADPH.

It belongs to the NAD-dependent glycerol-3-phosphate dehydrogenase family.

The protein resides in the cytoplasm. The catalysed reaction is sn-glycerol 3-phosphate + NAD(+) = dihydroxyacetone phosphate + NADH + H(+). The enzyme catalyses sn-glycerol 3-phosphate + NADP(+) = dihydroxyacetone phosphate + NADPH + H(+). Its pathway is membrane lipid metabolism; glycerophospholipid metabolism. Its function is as follows. Catalyzes the reduction of the glycolytic intermediate dihydroxyacetone phosphate (DHAP) to sn-glycerol 3-phosphate (G3P), the key precursor for phospholipid synthesis. This Streptococcus pneumoniae serotype 19F (strain G54) protein is Glycerol-3-phosphate dehydrogenase [NAD(P)+].